The primary structure comprises 481 residues: Probable zeta-carotene desaturase (481 aa).

The protein belongs to the zeta carotene desaturase family. The cofactor is decylplastoquinone. It depends on 6-decylubiquinone as a cofactor.

It catalyses the reaction 9,9'-di-cis-zeta-carotene + 2 a quinone = 7,7',9,9'-tetra-cis-lycopene + 2 a quinol. It participates in carotenoid biosynthesis; lycopene biosynthesis. Functionally, catalyzes the conversion of zeta-carotene to lycopene via the intermediary of neurosporene. It carries out two consecutive desaturations (introduction of double bonds) at positions C-7 and C-7'. The protein is Probable zeta-carotene desaturase (zds) of Synechococcus elongatus (strain ATCC 33912 / PCC 7942 / FACHB-805) (Anacystis nidulans R2).